A 37-amino-acid chain; its full sequence is MIDDQDLGFIANFLGIFIFALVIAYHYVTADPKYEAT.

The Lumenal segment spans residues 1–7 (MIDDQDL). A helical membrane pass occupies residues 8–28 (GFIANFLGIFIFALVIAYHYV). The Cytoplasmic segment spans residues 29–37 (TADPKYEAT).

This sequence belongs to the OST4 family. As to quaternary structure, component of the oligosaccharyltransferase (OST) complex.

The protein localises to the endoplasmic reticulum membrane. Functionally, subunit of the oligosaccharyl transferase (OST) complex that catalyzes the initial transfer of a defined glycan (Glc(3)Man(9)GlcNAc(2) in eukaryotes) from the lipid carrier dolichol-pyrophosphate to an asparagine residue within an Asn-X-Ser/Thr consensus motif in nascent polypeptide chains, the first step in protein N-glycosylation. N-glycosylation occurs cotranslationally and the complex associates with the Sec61 complex at the channel-forming translocon complex that mediates protein translocation across the endoplasmic reticulum (ER). All subunits are required for a maximal enzyme activity. The polypeptide is Dolichyl-diphosphooligosaccharide--protein glycosyltransferase subunit 4A (OST4A) (Arabidopsis thaliana (Mouse-ear cress)).